Consider the following 708-residue polypeptide: Kelch-like protein 11 (708 aa).

An N-terminal signal peptide occupies residues 1 to 15; the sequence is MAAAAVAAAAAAAAA. The interval 47–70 is disordered; the sequence is DFGPGPGISAMEASGGDPGPEAED. In terms of domain architecture, BTB spans 94–170; the sequence is CDITLCFGGA…MYTGRIRVST (77 aa). The BACK domain occupies 205–307; the sequence is CVAIHSLAHM…KPTYLTRHVK (103 aa). Kelch repeat units follow at residues 360-407, 408-453, 455-501, 503-556, and 610-661; these read VIMV…VTES, YVYV…EVKG, LYSI…AIED, FVYI…VVNS, and DVFI…HVRI. The residue at position 465 (serine 465) is a Phosphoserine.

In terms of assembly, component of a cullin-RING-based BCR (BTB-CUL3-RBX1) E3 ubiquitin-protein ligase complex. Homodimer. Interacts with CUL3.

In terms of biological role, component of a cullin-RING-based BCR (BTB-CUL3-RBX1) E3 ubiquitin-protein ligase complex that mediates the ubiquitination of target proteins, leading most often to their proteasomal degradation. The chain is Kelch-like protein 11 (KLHL11) from Homo sapiens (Human).